A 319-amino-acid chain; its full sequence is Acetyl esterase (319 aa).

Positions His-91–Gly-93 match the Involved in the stabilization of the negatively charged intermediate by the formation of the oxyanion hole motif. Active-site residues include Ser-165, Asp-262, and His-292.

It belongs to the 'GDXG' lipolytic enzyme family. Homodimer. Interacts with MalT and MelA.

It is found in the cytoplasm. Functionally, displays esterase activity towards short chain fatty esters (acyl chain length of up to 8 carbons). Able to hydrolyze triacetylglycerol (triacetin) and tributyrylglycerol (tributyrin), but not trioleylglycerol (triolein) or cholesterol oleate. Negatively regulates MalT activity by antagonizing maltotriose binding. Inhibits MelA galactosidase activity. This Escherichia coli (strain 55989 / EAEC) protein is Acetyl esterase.